The following is an 854-amino-acid chain: Fibroblast growth factor receptor 1 (854 aa).

An N-terminal signal peptide occupies residues 1–20 (MSGLFFLLSELLILLGKINS). Topologically, residues 21–383 (VSKKSLCHPE…NFFMNSVPLS (363 aa)) are extracellular. The Ig-like C2-type 1 domain maps to 29 to 120 (PELFKIDNKL…SSVFFLINVT (92 aa)). A disulfide bridge links Cys50 with Cys102. Asn95, Asn99, Asn110, Asn118, Asn140, Asn175, Asn202, Asn248, Asn283, Asn317, and Asn346 each carry an N-linked (GlcNAc...) asparagine glycan. Ig-like C2-type domains lie at 147-259 (PEMG…FTFT) and 268-369 (PHLT…LSVI). Cys166 and Cys242 form a disulfide bridge. Cysteines 288 and 353 form a disulfide. The helical transmembrane segment at 384–404 (IFLVIGFFVAIILLSLIIYCF) threads the bilayer. Residues 405–854 (FLQYKNAVDS…SDYLEPKCLV (450 aa)) lie on the Cytoplasmic side of the membrane. A Protein kinase domain is found at 551-822 (KITNKKLGEG…EIVEILIDII (272 aa)). ATP contacts are provided by residues 557–565 (LGEGAFGMV) and Lys585. The active-site Proton acceptor is the Asp689. Tyr718 bears the Phosphotyrosine; by autocatalysis mark.

This sequence belongs to the protein kinase superfamily. Tyr protein kinase family. Fibroblast growth factor receptor subfamily. Expressed in brain, stem cells and the mesenchymal cells.

It is found in the membrane. It catalyses the reaction L-tyrosyl-[protein] + ATP = O-phospho-L-tyrosyl-[protein] + ADP + H(+). Its function is as follows. Receptor for basic fibroblast growth factor. The sequence is that of Fibroblast growth factor receptor 1 (FGFR1) from Dugesia japonica (Planarian).